Here is a 192-residue protein sequence, read N- to C-terminus: Adenylate kinase (192 aa).

An ATP-binding site is contributed by 10–15 (GSGKGT). An NMP region spans residues 30–59 (STGDMLREVISRETEVGRKAKAIINAGALV). Residues T31, R36, 57 to 59 (ALV), 85 to 88 (GYPR), and Q92 each bind AMP. Positions 126–142 (KRVQETIAVGGQVRSDD) are LID. ATP is bound at residue R127. Residues R139 and R150 each coordinate AMP. M178 contacts ATP.

The protein belongs to the adenylate kinase family. In terms of assembly, monomer.

It localises to the cytoplasm. The catalysed reaction is AMP + ATP = 2 ADP. The protein operates within purine metabolism; AMP biosynthesis via salvage pathway; AMP from ADP: step 1/1. Its function is as follows. Catalyzes the reversible transfer of the terminal phosphate group between ATP and AMP. Plays an important role in cellular energy homeostasis and in adenine nucleotide metabolism. The chain is Adenylate kinase from Bartonella quintana (strain Toulouse) (Rochalimaea quintana).